The primary structure comprises 431 residues: Trigger factor (431 aa).

The PPIase FKBP-type domain maps to Asp160–Pro245.

Belongs to the FKBP-type PPIase family. Tig subfamily.

The protein localises to the cytoplasm. The catalysed reaction is [protein]-peptidylproline (omega=180) = [protein]-peptidylproline (omega=0). Involved in protein export. Acts as a chaperone by maintaining the newly synthesized protein in an open conformation. Functions as a peptidyl-prolyl cis-trans isomerase. The protein is Trigger factor of Mannheimia succiniciproducens (strain KCTC 0769BP / MBEL55E).